The primary structure comprises 307 residues: MIEVIFLGTGGIKPTPERNVPSIAIKVEGELILFDVGEGTLRQMEIAGLSPMKIRRIFITHFHGDHYLGLPALIQTMNLWKRKEPLHIYGPENSIEFIKNLLNSGYFAPSFDVTVHELPGKARLQFEKYEVWAFEVSHGVPALGYVFKEKDRRGSFDLEKIKNLGLEPGPWMKELEEKKVINIGGRTIRLSEVTGPKKRGAKIVYTGDTEPCENVIQFSRRANLLIHEATYLNSEDRGESYHTTVEEACEIWKKSKAFNLALFHRGPRYSFKEYKEGATKLCPQAMIPRDFDRIMVKGAEYVIFKVR.

Zn(2+) contacts are provided by H61, H63, D65, H66, H138, D208, and H264. The Proton acceptor role is filled by D65.

The protein belongs to the RNase Z family. As to quaternary structure, homodimer. It depends on Zn(2+) as a cofactor.

It catalyses the reaction Endonucleolytic cleavage of RNA, removing extra 3' nucleotides from tRNA precursor, generating 3' termini of tRNAs. A 3'-hydroxy group is left at the tRNA terminus and a 5'-phosphoryl group is left at the trailer molecule.. Zinc phosphodiesterase, which displays some tRNA 3'-processing endonuclease activity. Probably involved in tRNA maturation, by removing a 3'-trailer from precursor tRNA. The sequence is that of Ribonuclease Z from Pyrococcus abyssi (strain GE5 / Orsay).